Here is a 277-residue protein sequence, read N- to C-terminus: 4-hydroxy-3-methylbut-2-enyl diphosphate reductase (277 aa).

Residue Cys-12 coordinates [4Fe-4S] cluster. (2E)-4-hydroxy-3-methylbut-2-enyl diphosphate is bound by residues His-36 and His-70. Dimethylallyl diphosphate contacts are provided by His-36 and His-70. His-36 and His-70 together coordinate isopentenyl diphosphate. Cys-92 lines the [4Fe-4S] cluster pocket. Residue His-120 participates in (2E)-4-hydroxy-3-methylbut-2-enyl diphosphate binding. His-120 is a dimethylallyl diphosphate binding site. Isopentenyl diphosphate is bound at residue His-120. The Proton donor role is filled by Glu-122. Position 158 (Thr-158) interacts with (2E)-4-hydroxy-3-methylbut-2-enyl diphosphate. Residue Cys-186 participates in [4Fe-4S] cluster binding. (2E)-4-hydroxy-3-methylbut-2-enyl diphosphate is bound by residues Ser-214, Asn-216, and Ser-258. Residues Ser-214, Asn-216, and Ser-258 each contribute to the dimethylallyl diphosphate site. Residues Ser-214, Asn-216, and Ser-258 each contribute to the isopentenyl diphosphate site.

The protein belongs to the IspH family. Requires [4Fe-4S] cluster as cofactor.

It carries out the reaction isopentenyl diphosphate + 2 oxidized [2Fe-2S]-[ferredoxin] + H2O = (2E)-4-hydroxy-3-methylbut-2-enyl diphosphate + 2 reduced [2Fe-2S]-[ferredoxin] + 2 H(+). The enzyme catalyses dimethylallyl diphosphate + 2 oxidized [2Fe-2S]-[ferredoxin] + H2O = (2E)-4-hydroxy-3-methylbut-2-enyl diphosphate + 2 reduced [2Fe-2S]-[ferredoxin] + 2 H(+). It functions in the pathway isoprenoid biosynthesis; dimethylallyl diphosphate biosynthesis; dimethylallyl diphosphate from (2E)-4-hydroxy-3-methylbutenyl diphosphate: step 1/1. It participates in isoprenoid biosynthesis; isopentenyl diphosphate biosynthesis via DXP pathway; isopentenyl diphosphate from 1-deoxy-D-xylulose 5-phosphate: step 6/6. Its function is as follows. Catalyzes the conversion of 1-hydroxy-2-methyl-2-(E)-butenyl 4-diphosphate (HMBPP) into a mixture of isopentenyl diphosphate (IPP) and dimethylallyl diphosphate (DMAPP). Acts in the terminal step of the DOXP/MEP pathway for isoprenoid precursor biosynthesis. This Campylobacter jejuni subsp. doylei (strain ATCC BAA-1458 / RM4099 / 269.97) protein is 4-hydroxy-3-methylbut-2-enyl diphosphate reductase.